Consider the following 102-residue polypeptide: uncharacterized protein (102 aa).

A run of 3 helical transmembrane segments spans residues 14-34, 35-55, and 76-96; these read IKNWINFIKPIITIVGIVISA, VAFTISILWGMLFLILFLILI, and ILSIIGSIIIISIIVYSHCYI.

It is found in the cell membrane. This is an uncharacterized protein from Methanocaldococcus jannaschii (strain ATCC 43067 / DSM 2661 / JAL-1 / JCM 10045 / NBRC 100440) (Methanococcus jannaschii).